Reading from the N-terminus, the 1609-residue chain is Transmembrane protein 131-like (1609 aa).

An N-terminal signal peptide occupies residues 1–40; the sequence is MAGLRRPQPGCYCRTAAAVNLLLGVFQVLLPCCRPGGAQG. The Extracellular portion of the chain corresponds to 41–869; it reads QAIEPLPNVV…VVPGPSWEES (829 aa). 6 N-linked (GlcNAc...) asparagine glycosylation sites follow: asparagine 343, asparagine 439, asparagine 522, asparagine 593, asparagine 709, and asparagine 846. Positions 696 to 916 are required for Wnt-signaling inhibition and LRP6 degradation; it reads DYGKVTSLIL…QNASSSSQQN (221 aa). The helical transmembrane segment at 870–890 threads the bilayer; that stretch reads FWRLTVFFVSLSLLGVILIAF. At 891–1609 the chain is on the cytoplasmic side; that stretch reads QQAQYILMEF…SRDSSYCGNV (719 aa). Disordered regions lie at residues 946-974, 991-1014, 1108-1144, 1159-1178, and 1304-1340; these read RGKN…YGHS, TAAA…SSLP, KTSK…NQQV, VDTK…EDMF, and SSSD…PMVD. Residues 952–961 are compositionally biased toward polar residues; it reads PVNTPQSRIQ. Residues 991–1000 show a composition bias toward low complexity; that stretch reads TAAASSTSTT. Serine 1122 carries the post-translational modification Phosphoserine. Residues 1304 to 1331 are compositionally biased toward low complexity; the sequence is SSSDCGSSSGSVRASRGSWGSWSSTSSS.

Belongs to the TMEM131 family. As to expression, expressed in thymocytes.

Its subcellular location is the cell membrane. It is found in the cytoplasm. The protein resides in the endoplasmic reticulum. In terms of biological role, membrane-associated form that antagonizes canonical Wnt signaling by triggering lysosome-dependent degradation of Wnt-activated LRP6. Regulates thymocyte proliferation. The chain is Transmembrane protein 131-like from Homo sapiens (Human).